The chain runs to 282 residues: Phosphatidylglycerol--prolipoprotein diacylglyceryl transferase (282 aa).

A run of 3 helical transmembrane segments spans residues 18–38 (LSIK…YFIA), 55–75 (VIFY…VIFQ), and 89–109 (IWHG…TGII). Residue Arg-137 participates in a 1,2-diacyl-sn-glycero-3-phospho-(1'-sn-glycerol) binding. A run of 2 helical transmembrane segments spans residues 203–223 (VGET…FVEG) and 235–255 (IRVA…ILIY).

Belongs to the Lgt family.

It localises to the cell membrane. The enzyme catalyses L-cysteinyl-[prolipoprotein] + a 1,2-diacyl-sn-glycero-3-phospho-(1'-sn-glycerol) = an S-1,2-diacyl-sn-glyceryl-L-cysteinyl-[prolipoprotein] + sn-glycerol 1-phosphate + H(+). It functions in the pathway protein modification; lipoprotein biosynthesis (diacylglyceryl transfer). Catalyzes the transfer of the diacylglyceryl group from phosphatidylglycerol to the sulfhydryl group of the N-terminal cysteine of a prolipoprotein, the first step in the formation of mature lipoproteins. This chain is Phosphatidylglycerol--prolipoprotein diacylglyceryl transferase, found in Staphylococcus haemolyticus (strain JCSC1435).